We begin with the raw amino-acid sequence, 318 residues long: NADH-quinone oxidoreductase subunit H 2 (318 aa).

9 consecutive transmembrane segments (helical) span residues 4-24 (LLIA…AGVF), 77-97 (LAPA…AFAP), 106-126 (VGVL…VLGA), 146-166 (LAYE…AGSF), 179-199 (LWFI…GLAA), 214-234 (LVAG…FLGE), 238-258 (ILLV…GPIL), 262-282 (VWFG…RAAL), and 293-313 (FAWK…AWIA).

The protein belongs to the complex I subunit 1 family. In terms of assembly, NDH-1 is composed of 14 different subunits. Subunits NuoA, H, J, K, L, M, N constitute the membrane sector of the complex.

The protein localises to the cell inner membrane. It catalyses the reaction a quinone + NADH + 5 H(+)(in) = a quinol + NAD(+) + 4 H(+)(out). In terms of biological role, NDH-1 shuttles electrons from NADH, via FMN and iron-sulfur (Fe-S) centers, to quinones in the respiratory chain. The immediate electron acceptor for the enzyme in this species is believed to be ubiquinone. Couples the redox reaction to proton translocation (for every two electrons transferred, four hydrogen ions are translocated across the cytoplasmic membrane), and thus conserves the redox energy in a proton gradient. This subunit may bind ubiquinone. The chain is NADH-quinone oxidoreductase subunit H 2 from Cereibacter sphaeroides (strain ATCC 17029 / ATH 2.4.9) (Rhodobacter sphaeroides).